A 208-amino-acid chain; its full sequence is Small ribosomal subunit protein uS4 (208 aa).

The 65-residue stretch at 95 to 159 (RRIDNIVYRA…FKKLVRSNIE (65 aa)) folds into the S4 RNA-binding domain.

This sequence belongs to the universal ribosomal protein uS4 family. In terms of assembly, part of the 30S ribosomal subunit. Contacts protein S5. The interaction surface between S4 and S5 is involved in control of translational fidelity.

In terms of biological role, one of the primary rRNA binding proteins, it binds directly to 16S rRNA where it nucleates assembly of the body of the 30S subunit. With S5 and S12 plays an important role in translational accuracy. The chain is Small ribosomal subunit protein uS4 from Borrelia recurrentis (strain A1).